The sequence spans 191 residues: Fe/S biogenesis protein NfuA (191 aa).

2 residues coordinate [4Fe-4S] cluster: Cys149 and Cys152.

This sequence belongs to the NfuA family. In terms of assembly, homodimer. [4Fe-4S] cluster serves as cofactor.

Involved in iron-sulfur cluster biogenesis. Binds a 4Fe-4S cluster, can transfer this cluster to apoproteins, and thereby intervenes in the maturation of Fe/S proteins. Could also act as a scaffold/chaperone for damaged Fe/S proteins. The sequence is that of Fe/S biogenesis protein NfuA from Pseudoalteromonas translucida (strain TAC 125).